Here is a 3079-residue protein sequence, read N- to C-terminus: Inhibitory regulator protein IRA2 (3079 aa).

The tract at residues 392-554 is disordered; it reads NQNAHQGSSS…RASYDAHKTG (163 aa). Positions 399–416 are enriched in low complexity; that stretch reads SSSPSSSSPSSPPSSSSS. Residues 417–442 show a composition bias toward polar residues; that stretch reads DNNNQNIIAKSLSRQLSHHQSYIQQQ. Over residues 449 to 477 the composition is skewed to low complexity; it reads SSWTTNSQSSTSLSSSTSNSTTTDFSTHT. A compositionally biased stretch (polar residues) spans 488-497; it reads DTPTMSNITI. Low complexity predominate over residues 498–528; that stretch reads SASSLLSQTPTPTTQLQQRLNSAAAAAAAAA. Polar residues predominate over residues 529 to 546; the sequence is SPSNSTPTGYTAEQQSRA. Position 635 is a phosphothreonine (Thr635). 3 disordered regions span residues 867–898, 912–935, and 952–980; these read FKGSSPSLCSTTRSRSGSTSQSSMTPVSPLGL, GSSTSRNSDNVNSLNSSPKNLSSD, and GPSSIIRNKIPTTLTSPPGTEKSSPVQRP. Low complexity-rich tracts occupy residues 873-894 and 921-934; these read SLCSTTRSRSGSTSQSSMTPVS and NVNSLNSSPKNLSS. Residues 961-980 are compositionally biased toward polar residues; the sequence is IPTTLTSPPGTEKSSPVQRP. Residues 1717 to 1922 form the Ras-GAP domain; it reads NATHIVVAQL…DRIFRFLAEL (206 aa).

It localises to the cytoplasm. Inhibitory regulator of the Ras-cyclic AMP pathway. Stimulates the GTPase activity of Ras proteins. The sequence is that of Inhibitory regulator protein IRA2 (IRA2) from Saccharomyces cerevisiae (strain ATCC 204508 / S288c) (Baker's yeast).